We begin with the raw amino-acid sequence, 89 residues long: Small ribosomal subunit protein uS15 (89 aa).

The protein belongs to the universal ribosomal protein uS15 family. As to quaternary structure, part of the 30S ribosomal subunit. Forms a bridge to the 50S subunit in the 70S ribosome, contacting the 23S rRNA.

In terms of biological role, one of the primary rRNA binding proteins, it binds directly to 16S rRNA where it helps nucleate assembly of the platform of the 30S subunit by binding and bridging several RNA helices of the 16S rRNA. Functionally, forms an intersubunit bridge (bridge B4) with the 23S rRNA of the 50S subunit in the ribosome. This Chlorobium phaeovibrioides (strain DSM 265 / 1930) (Prosthecochloris vibrioformis (strain DSM 265)) protein is Small ribosomal subunit protein uS15.